Here is a 132-residue protein sequence, read N- to C-terminus: Small ribosomal subunit protein uS8 (132 aa).

The protein belongs to the universal ribosomal protein uS8 family. Part of the 30S ribosomal subunit. Contacts proteins S5 and S12.

Functionally, one of the primary rRNA binding proteins, it binds directly to 16S rRNA central domain where it helps coordinate assembly of the platform of the 30S subunit. The protein is Small ribosomal subunit protein uS8 of Streptococcus pyogenes serotype M49 (strain NZ131).